Reading from the N-terminus, the 169-residue chain is Small ribosomal subunit protein uS13m (169 aa).

The segment at 149–169 (KKLQEKKNKEQKKSQKCKTKK) is disordered. The span at 150–161 (KLQEKKNKEQKK) shows a compositional bias: basic and acidic residues.

Belongs to the universal ribosomal protein uS13 family. Part of the small ribosomal subunit.

The protein resides in the mitochondrion. Functionally, located at the top of the head of the small subunit, it contacts several helices of the small subunit rRNA. The polypeptide is Small ribosomal subunit protein uS13m (mrps13) (Dictyostelium discoideum (Social amoeba)).